Here is a 137-residue protein sequence, read N- to C-terminus: BolA-like protein 1 (137 aa).

The residue at position 81 (Ser-81) is a Phosphoserine. Residues 114-137 (WRENSQLDTSPPCLGGNKKTLGTP) form a disordered region.

It belongs to the BolA/IbaG family. Interacts with GLRX5. In terms of tissue distribution, widely expressed.

It localises to the mitochondrion. Its function is as follows. Acts as a mitochondrial iron-sulfur (Fe-S) cluster assembly factor that facilitates (Fe-S) cluster insertion into a subset of mitochondrial proteins. Probably acts together with the monothiol glutaredoxin GLRX5. May protect cells against oxidative stress. The polypeptide is BolA-like protein 1 (Homo sapiens (Human)).